The sequence spans 100 residues: Probable DNA-binding protein HU (100 aa).

This sequence belongs to the bacterial histone-like protein family.

Histone-like DNA-binding protein which is capable of wrapping DNA to stabilize it, and thus to prevent its denaturation under extreme environmental conditions. The polypeptide is Probable DNA-binding protein HU (hup) (Chlamydia muridarum (strain MoPn / Nigg)).